The primary structure comprises 414 residues: Chaperone protein dnaJ 39 (414 aa).

Residues 1–24 are compositionally biased toward basic and acidic residues; sequence MATHSSRSENKDAGEEDELRRRNP. Positions 1-36 are disordered; the sequence is MATHSSRSENKDAGEEDELRRRNPYEVLGIPSNSTD. One can recognise a J domain in the interval 23-88; the sequence is NPYEVLGIPS…ENRRLYDTTG (66 aa). Residues 296–324 are a coiled coil; it reads EKESLRSTEAQIVSKRTELLKFEAEYHEV. The segment at 362–395 is disordered; it reads TKQGSSKSRSWSKKKSSLLMEPREEGEVAVREEG. A compositionally biased stretch (basic and acidic residues) spans 382-395; the sequence is EPREEGEVAVREEG.

The protein belongs to the DnaJ family. C/III subfamily. As to expression, expressed constitutively at low levels in seedlings, roots, leaves, stems, flowers and siliques.

The protein resides in the membrane. Its function is as follows. Plays a continuous role in plant development probably in the structural organization of compartments. Seems to be involved in early gravitropic signal transduction within the gravity-perceiving cells (statocytes). This Arabidopsis thaliana (Mouse-ear cress) protein is Chaperone protein dnaJ 39 (ATJ39).